The sequence spans 230 residues: Orotidine 5'-phosphate decarboxylase (230 aa).

Substrate is bound by residues D10, K32, 59–68 (DLKYHDIPNT), T119, R180, Q189, G209, and R210. The Proton donor role is filled by K61.

This sequence belongs to the OMP decarboxylase family. Type 1 subfamily. In terms of assembly, homodimer.

It catalyses the reaction orotidine 5'-phosphate + H(+) = UMP + CO2. Its pathway is pyrimidine metabolism; UMP biosynthesis via de novo pathway; UMP from orotate: step 2/2. Catalyzes the decarboxylation of orotidine 5'-monophosphate (OMP) to uridine 5'-monophosphate (UMP). The sequence is that of Orotidine 5'-phosphate decarboxylase from Haemophilus influenzae (strain 86-028NP).